Reading from the N-terminus, the 67-residue chain is uncharacterized protein (67 aa).

2 consecutive transmembrane segments (helical) span residues 10 to 30 (EFFI…ITMW) and 40 to 60 (LMVG…WMVF).

The protein belongs to the plectrovirus ORF10 family.

Its subcellular location is the host membrane. This is an uncharacterized protein from Spiroplasma citri (SpV1).